The primary structure comprises 261 residues: uncharacterized protein (261 aa).

Positions 1-22 (MKYYGKCISYISILILTFFIGG) are cleaved as a signal peptide. The N-palmitoyl cysteine moiety is linked to residue cysteine 23. Cysteine 23 carries the S-diacylglycerol cysteine lipid modification.

The protein belongs to the staphylococcal tandem lipoprotein family.

It is found in the cell membrane. This is an uncharacterized protein from Staphylococcus epidermidis (strain ATCC 12228 / FDA PCI 1200).